A 916-amino-acid chain; its full sequence is Autophagy-related protein 9 (916 aa).

Over residues 1 to 11 (MSRNSPLQSGQ) the composition is skewed to polar residues. Disordered stretches follow at residues 1-27 (MSRN…SQNN) and 86-150 (DSES…NARD). The Cytoplasmic segment spans residues 1-238 (MSRNSPLQSG…YYYRGKGMLN (238 aa)). A compositionally biased stretch (low complexity) spans 92–105 (DLSSSSSASPSVVV). The span at 115 to 124 (SDNEDDEVDD) shows a compositional bias: acidic residues. A helical transmembrane segment spans residues 239-259 (IVLSSIIDLLILVFILGFTVF). Over 260–293 (LKWGINYRYFFDNYKDSTYITLADLIIPNFLVDE) the chain is Lumenal. A helical transmembrane segment spans residues 294–314 (VPLLAKFFLFGFVCYIVLRLI). Residues 315-481 (QLYFNYNYKL…KELNSRFKMA (167 aa)) are Cytoplasmic-facing. The stretch at 482–502 (AIINLILCPFIVIYFVLLYFF) is an intramembrane region. Over 503–568 (RYFNEYKSNP…RGFLVINLMN (66 aa)) the chain is Cytoplasmic. The chain crosses the membrane as a helical span at residues 569 to 589 (LVNFISGAIMAILVIMGLWFE). Over 590-605 (DENHSFWSFELTEGKS) the chain is Lumenal. The chain crosses the membrane as a helical span at residues 606 to 626 (TLFYISIFGTLWAITSTSTST). The Cytoplasmic segment spans residues 627 to 681 (SDTADNLNPNSHSFVYDPEASLRYVSQFTHYLPSSWNRRLHTVEVKNEFCELYSL). The stretch at 682–702 (KIIIILNEIFSLILTPFILWF) is an intramembrane region. The Cytoplasmic portion of the chain corresponds to 703-916 (RASSSSGAII…NQFYKQDLGR (214 aa)). Residues 747 to 814 (LNKRKGKSKR…ESGNDLNADT (68 aa)) form a disordered region. Residues 750-762 (RKGKSKRSRRSKT) are compositionally biased toward basic residues.

This sequence belongs to the ATG9 family. In terms of assembly, homotrimer; forms a homotrimer with a central pore that forms a path between the two membrane leaflets. Post-translationally, phosphorylated by ATG1. ATG1 phosphorylation is required for preautophagosome elongation.

The protein resides in the preautophagosomal structure membrane. It is found in the cytoplasmic vesicle membrane. Its subcellular location is the golgi apparatus membrane. The protein localises to the endoplasmic reticulum membrane. It catalyses the reaction a 1,2-diacyl-sn-glycero-3-phosphocholine(in) = a 1,2-diacyl-sn-glycero-3-phosphocholine(out). It carries out the reaction a 1,2-diacyl-sn-glycero-3-phospho-L-serine(in) = a 1,2-diacyl-sn-glycero-3-phospho-L-serine(out). The catalysed reaction is a 1,2-diacyl-sn-glycero-3-phosphoethanolamine(in) = a 1,2-diacyl-sn-glycero-3-phosphoethanolamine(out). The enzyme catalyses a 1,2-diacyl-sn-glycero-3-phospho-(1D-myo-inositol-3-phosphate)(in) = a 1,2-diacyl-sn-glycero-3-phospho-(1D-myo-inositol-3-phosphate)(out). In terms of biological role, phospholipid scramblase involved in autophagy and cytoplasm to vacuole transport (Cvt) vesicle formation. Cycles between the preautophagosomal structure/phagophore assembly site (PAS) and the cytoplasmic vesicle pool and supplies membrane for the growing autophagosome. Lipid scramblase activity plays a key role in preautophagosomal structure/phagophore assembly by distributing the phospholipids that arrive through ATG2 from the cytoplasmic to the luminal leaflet of the bilayer, thereby driving autophagosomal membrane expansion. Required for mitophagy. Also involved in endoplasmic reticulum-specific autophagic process and is essential for the survival of cells subjected to severe ER stress. Different machineries are required for anterograde trafficking to the PAS during either the Cvt pathway or bulk autophagy and for retrograde trafficking. The protein is Autophagy-related protein 9 (ATG9) of Scheffersomyces stipitis (strain ATCC 58785 / CBS 6054 / NBRC 10063 / NRRL Y-11545) (Yeast).